An 84-amino-acid polypeptide reads, in one-letter code: Beta-toxin Ct16 (84 aa).

A signal peptide spans 1–19; sequence MNYFILLFVATFLLLDVNC. The LCN-type CS-alpha/beta domain occupies 21 to 80; that stretch reads KDGYPVDANNCKFECWKNEYCDELCKAKRAESGYCYKLKLSCWCEGLPDDEPTKTSDRCY. 4 cysteine pairs are disulfide-bonded: cysteine 31–cysteine 79, cysteine 35–cysteine 55, cysteine 41–cysteine 62, and cysteine 45–cysteine 64. Threonine 82 carries the post-translational modification Threonine amide.

The protein belongs to the long (4 C-C) scorpion toxin superfamily. Sodium channel inhibitor family. Alpha subfamily. As to expression, expressed by the venom gland.

It is found in the secreted. Functionally, alpha toxins bind voltage-independently at site-3 of sodium channels (Nav) and inhibit the inactivation of the activated channels, thereby blocking neuronal transmission. Is possibly toxic to mice. In Centruroides tecomanus (Scorpion), this protein is Beta-toxin Ct16.